Consider the following 181-residue polypeptide: Shikimate kinase 2 (181 aa).

Residue 12–17 coordinates ATP; it reads GCGKTT. The Mg(2+) site is built by T16 and D32. Substrate-binding residues include D34, R58, and G79. An LID domain region spans residues 112–126; the sequence is EAEPEADLRPTLTGK. R120 serves as a coordination point for ATP. R139 contributes to the substrate binding site.

Belongs to the shikimate kinase family. AroL subfamily. Monomer. The cofactor is Mg(2+).

It is found in the cytoplasm. The catalysed reaction is shikimate + ATP = 3-phosphoshikimate + ADP + H(+). Its pathway is metabolic intermediate biosynthesis; chorismate biosynthesis; chorismate from D-erythrose 4-phosphate and phosphoenolpyruvate: step 5/7. Its function is as follows. Catalyzes the specific phosphorylation of the 3-hydroxyl group of shikimic acid using ATP as a cosubstrate. The sequence is that of Shikimate kinase 2 from Salmonella heidelberg (strain SL476).